A 264-amino-acid polypeptide reads, in one-letter code: Glutamate racemase (264 aa).

Substrate is bound by residues Asp-10–Ser-11 and Tyr-42–Gly-43. Residue Cys-73 is the Proton donor/acceptor of the active site. Asn-74–Thr-75 serves as a coordination point for substrate. Residue Cys-183 is the Proton donor/acceptor of the active site. Thr-184 to His-185 contacts substrate.

It belongs to the aspartate/glutamate racemases family.

It carries out the reaction L-glutamate = D-glutamate. Its pathway is cell wall biogenesis; peptidoglycan biosynthesis. In terms of biological role, provides the (R)-glutamate required for cell wall biosynthesis. This chain is Glutamate racemase, found in Streptococcus pyogenes serotype M18 (strain MGAS8232).